Here is a 730-residue protein sequence, read N- to C-terminus: Polyphosphate kinase (730 aa).

Over residues 1–21 (MMRHDRNVTEIDAETRPDENL) the composition is skewed to basic and acidic residues. The disordered stretch occupies residues 1 to 39 (MMRHDRNVTEIDAETRPDENLWHSGDSAVGAPPAATPAA). Residue Asn86 coordinates ATP. Mg(2+)-binding residues include Arg423 and Arg453. The Phosphohistidine intermediate role is filled by His483. 3 residues coordinate ATP: Tyr516, Arg612, and His640.

This sequence belongs to the polyphosphate kinase 1 (PPK1) family. Requires Mg(2+) as cofactor. An intermediate of this reaction is the autophosphorylated ppk in which a phosphate is covalently linked to a histidine residue through a N-P bond.

The enzyme catalyses [phosphate](n) + ATP = [phosphate](n+1) + ADP. Functionally, catalyzes the reversible transfer of the terminal phosphate of ATP to form a long-chain polyphosphate (polyP). In Mycolicibacterium paratuberculosis (strain ATCC BAA-968 / K-10) (Mycobacterium paratuberculosis), this protein is Polyphosphate kinase.